A 5054-amino-acid polypeptide reads, in one-letter code: Malformin synthetase mlfA (5054 aa).

An adenylation 1 region spans residues 194–585; the sequence is ERRAANRPHS…CGRADTQVKL (392 aa). The region spanning 723–799 is the Carrier 1 domain; sequence LGLSQLEQEI…EASSLAEVQE (77 aa). Ser-760 is modified (O-(pantetheine 4'-phosphoryl)serine). Residues 837-1268 form a condensation 1 region; sequence EDVFPCTTMQ…ALNTLTLLQA (432 aa). An adenylation 2 region spans residues 1296–1685; that stretch reads DRWVTRQPES…GRKDTQVKLR (390 aa). One can recognise a Carrier 2 domain in the interval 1823–1900; sequence TASSKLELTL…QLAAILGEAT (78 aa). O-(pantetheine 4'-phosphoryl)serine is present on Ser-1860. 2 disordered regions span residues 1899-1929 and 1964-1994; these read ATGQPESSASSTTEEGFTFSTPDDSSTNDGV and GSSSCKTPSVSSSSSSSSSRKKKSAKVVSPV. Composition is skewed to low complexity over residues 1904–1927 and 1965–1981; these read ESSASSTTEEGFTFSTPDDSSTND and SSSCKTPSVSSSSSSSS. A condensation 2 region spans residues 2033-2448; the sequence is EDIYPATALQ…GVSYRDKQTL (416 aa). An adenylation 3 region spans residues 2471–2863; that stretch reads VRTPHAPAVF…IGRRDGQLKL (393 aa). Residues 2999-3075 enclose the Carrier 3 domain; it reads RPATAQEREM…QLMRHLSANG (77 aa). Ser-3036 is modified (O-(pantetheine 4'-phosphoryl)serine). Condensation regions lie at residues 3092–3557 and 3578–3997; these read WVPL…TYDQ and DIYP…EQLV. Positions 4022-4412 are adenylation 4; that stretch reads HSSREAACAW…VGRKDNQIKF (391 aa). The 77-residue stretch at 4546–4622 folds into the Carrier 4 domain; it reads MPFTAAECKM…DLAYRTANLV (77 aa). The residue at position 4583 (Ser-4583) is an O-(pantetheine 4'-phosphoryl)serine. The condensation 5 stretch occupies residues 4659 to 4972; sequence EVLPTTSFQR…LQTIVQHQNN (314 aa).

Belongs to the NRP synthetase family.

The protein operates within secondary metabolite biosynthesis. Its function is as follows. Nonribosomal peptide synthetase; part of the gene cluster that mediates the biosynthesis of malformins, cyclic pentapeptides with a disulfide bond between 2 consecutive cysteins, that show potential anti-tumor as well as antimalarial and antitrypanosomal properties. The nonribosomal peptide synthetase mlfA is responsible of the formation of the cyclic pentapeptide. The malformin biosynthesis clusters in malformin-producing fungi also contain enzymes involved in the formation of the disulfide bond between the two consecutive cysteins within malformins, in addition to additional tailoring enzymes such as methyltransferases or oxidoreductases. They are also composed of up to 4 major facilitator superfamily transporters, and transcription factors probably involved in the regulation of the expression of those clusters. The polypeptide is Malformin synthetase mlfA (Aspergillus niger (strain ATCC MYA-4892 / CBS 513.88 / FGSC A1513)).